Here is a 429-residue protein sequence, read N- to C-terminus: 3-phosphoshikimate 1-carboxyvinyltransferase (429 aa).

3 residues coordinate 3-phosphoshikimate: Lys23, Ser24, and Arg28. Phosphoenolpyruvate is bound at residue Lys23. Phosphoenolpyruvate is bound by residues Gly95 and Arg123. Residues Ser168, Gln170, Asp316, and Lys343 each coordinate 3-phosphoshikimate. Position 170 (Gln170) interacts with phosphoenolpyruvate. The active-site Proton acceptor is the Asp316. Residues Arg347 and Arg389 each coordinate phosphoenolpyruvate.

The protein belongs to the EPSP synthase family. Monomer.

It localises to the cytoplasm. It carries out the reaction 3-phosphoshikimate + phosphoenolpyruvate = 5-O-(1-carboxyvinyl)-3-phosphoshikimate + phosphate. The protein operates within metabolic intermediate biosynthesis; chorismate biosynthesis; chorismate from D-erythrose 4-phosphate and phosphoenolpyruvate: step 6/7. Functionally, catalyzes the transfer of the enolpyruvyl moiety of phosphoenolpyruvate (PEP) to the 5-hydroxyl of shikimate-3-phosphate (S3P) to produce enolpyruvyl shikimate-3-phosphate and inorganic phosphate. This is 3-phosphoshikimate 1-carboxyvinyltransferase from Bacillus anthracis (strain A0248).